A 498-amino-acid polypeptide reads, in one-letter code: ATP synthase subunit beta, chloroplastic (498 aa).

172–179 (GGAGVGKT) contributes to the ATP binding site.

It belongs to the ATPase alpha/beta chains family. F-type ATPases have 2 components, CF(1) - the catalytic core - and CF(0) - the membrane proton channel. CF(1) has five subunits: alpha(3), beta(3), gamma(1), delta(1), epsilon(1). CF(0) has four main subunits: a(1), b(1), b'(1) and c(9-12).

It localises to the plastid. The protein resides in the chloroplast thylakoid membrane. It catalyses the reaction ATP + H2O + 4 H(+)(in) = ADP + phosphate + 5 H(+)(out). Functionally, produces ATP from ADP in the presence of a proton gradient across the membrane. The catalytic sites are hosted primarily by the beta subunits. This chain is ATP synthase subunit beta, chloroplastic, found in Panax ginseng (Korean ginseng).